Consider the following 52-residue polypeptide: Photosystem II reaction center protein M (52 aa).

Residues 6–26 (FGFAASLLFVGVPTIFLIGLF) form a helical membrane-spanning segment. Residues 31–52 (DGEKSSFYSDTSKGRLSPEPKK) form a disordered region. Residues 42 to 52 (SKGRLSPEPKK) are compositionally biased toward basic and acidic residues.

The protein belongs to the PsbM family. PSII is composed of 1 copy each of membrane proteins PsbA, PsbB, PsbC, PsbD, PsbE, PsbF, PsbH, PsbI, PsbJ, PsbK, PsbL, PsbM, PsbT, PsbX, PsbY, Psb30/Ycf12, peripheral proteins PsbO, CyanoQ (PsbQ), PsbU, PsbV and a large number of cofactors. It forms dimeric complexes.

It localises to the cellular thylakoid membrane. Functionally, one of the components of the core complex of photosystem II (PSII). PSII is a light-driven water:plastoquinone oxidoreductase that uses light energy to abstract electrons from H(2)O, generating O(2) and a proton gradient subsequently used for ATP formation. It consists of a core antenna complex that captures photons, and an electron transfer chain that converts photonic excitation into a charge separation. This subunit is found at the monomer-monomer interface. This is Photosystem II reaction center protein M from Prochlorococcus marinus (strain NATL1A).